Consider the following 235-residue polypeptide: Orotidine 5'-phosphate decarboxylase (235 aa).

Substrate is bound by residues D12, K34, 61–70 (DMKLLDIDNT), T116, R177, Q186, G206, and R207. The active-site Proton donor is the K63.

The protein belongs to the OMP decarboxylase family. Type 1 subfamily. As to quaternary structure, homodimer.

The enzyme catalyses orotidine 5'-phosphate + H(+) = UMP + CO2. The protein operates within pyrimidine metabolism; UMP biosynthesis via de novo pathway; UMP from orotate: step 2/2. In terms of biological role, catalyzes the decarboxylation of orotidine 5'-monophosphate (OMP) to uridine 5'-monophosphate (UMP). In Rhizobium johnstonii (strain DSM 114642 / LMG 32736 / 3841) (Rhizobium leguminosarum bv. viciae), this protein is Orotidine 5'-phosphate decarboxylase.